The following is a 142-amino-acid chain: Large ribosomal subunit protein uL13 (142 aa).

Belongs to the universal ribosomal protein uL13 family. In terms of assembly, part of the 50S ribosomal subunit.

Functionally, this protein is one of the early assembly proteins of the 50S ribosomal subunit, although it is not seen to bind rRNA by itself. It is important during the early stages of 50S assembly. The polypeptide is Large ribosomal subunit protein uL13 (Xanthomonas oryzae pv. oryzae (strain MAFF 311018)).